Reading from the N-terminus, the 517-residue chain is B3 domain-containing protein REM1 (517 aa).

Positions 7-92 (FSLFQQKFRT…VFHVAVVSPS (86 aa)) form a DNA-binding region, TF-B3 1. Acidic residues predominate over residues 115–140 (DDVDDDDYGQDDEDDDDDDDEGEDNI). The segment at 115–158 (DDVDDDDYGQDDEDDDDDDDEGEDNIENISEKTDKRQEADSSSD) is disordered. Basic and acidic residues predominate over residues 143-157 (ISEKTDKRQEADSSS). 2 DNA-binding regions (TF-B3) span residues 162 to 259 (FITA…CPQE) and 285 to 385 (FLIV…FCSK). Residues 393 to 415 (GKGNQRTRKKRACETAPQPRNVK) are disordered.

In terms of tissue distribution, expressed in the shoot apical meristem (SAM), in the inflorescence apex and flowers.

It is found in the nucleus. Functionally, may play a role in flower development. The chain is B3 domain-containing protein REM1 (REM1) from Arabidopsis thaliana (Mouse-ear cress).